A 460-amino-acid chain; its full sequence is uncharacterized protein (460 aa).

Positions 6 to 64 (PVKKNNDYEIYIDDFGNMGEGIGKIDNFTVFVKDAVKGEKVRAKIIKVNKSFAIGKLID) constitute a TRAM domain. [4Fe-4S] cluster contacts are provided by C77, C83, C86, and C166. S-adenosyl-L-methionine contacts are provided by Q290, Y319, E340, and D388. C415 serves as the catalytic Nucleophile.

Belongs to the class I-like SAM-binding methyltransferase superfamily. RNA M5U methyltransferase family.

This is an uncharacterized protein from Clostridium acetobutylicum (strain ATCC 824 / DSM 792 / JCM 1419 / IAM 19013 / LMG 5710 / NBRC 13948 / NRRL B-527 / VKM B-1787 / 2291 / W).